The following is an 872-amino-acid chain: Alanine--tRNA ligase (872 aa).

Zn(2+) contacts are provided by His-567, His-571, Cys-669, and His-673.

This sequence belongs to the class-II aminoacyl-tRNA synthetase family. Requires Zn(2+) as cofactor.

Its subcellular location is the cytoplasm. It catalyses the reaction tRNA(Ala) + L-alanine + ATP = L-alanyl-tRNA(Ala) + AMP + diphosphate. In terms of biological role, catalyzes the attachment of alanine to tRNA(Ala) in a two-step reaction: alanine is first activated by ATP to form Ala-AMP and then transferred to the acceptor end of tRNA(Ala). Also edits incorrectly charged Ser-tRNA(Ala) and Gly-tRNA(Ala) via its editing domain. The chain is Alanine--tRNA ligase from Streptococcus pyogenes serotype M4 (strain MGAS10750).